We begin with the raw amino-acid sequence, 153 residues long: Small ribosomal subunit protein bS6 (153 aa).

Positions 97–153 (EEGPSAMMRKADRDRERDDRGGGFRGERDGGGFRGDRGDRGDRGPRRPRDEETADEE) are disordered. The span at 105 to 147 (RKADRDRERDDRGGGFRGERDGGGFRGDRGDRGDRGPRRPRDE) shows a compositional bias: basic and acidic residues.

The protein belongs to the bacterial ribosomal protein bS6 family.

Its function is as follows. Binds together with bS18 to 16S ribosomal RNA. The polypeptide is Small ribosomal subunit protein bS6 (Bradyrhizobium sp. (strain BTAi1 / ATCC BAA-1182)).